We begin with the raw amino-acid sequence, 237 residues long: Uridylate kinase (237 aa).

ATP is bound at residue 12-15 (KLSG). The involved in allosteric activation by GTP stretch occupies residues 20–25 (GDEGFG). Residue Gly54 participates in UMP binding. ATP-binding residues include Gly55 and Arg59. UMP-binding positions include Asp74 and 135–142 (TGSPFFTT). Residues Thr162, Tyr168, and Asp171 each coordinate ATP.

It belongs to the UMP kinase family. In terms of assembly, homohexamer.

It localises to the cytoplasm. It carries out the reaction UMP + ATP = UDP + ADP. The protein operates within pyrimidine metabolism; CTP biosynthesis via de novo pathway; UDP from UMP (UMPK route): step 1/1. With respect to regulation, allosterically activated by GTP. Inhibited by UTP. In terms of biological role, catalyzes the reversible phosphorylation of UMP to UDP. The polypeptide is Uridylate kinase (Actinobacillus pleuropneumoniae serotype 5b (strain L20)).